The chain runs to 56 residues: Large ribosomal subunit protein bL32 (56 aa).

Residues 1–56 (MAVQQNRKTRSKRGMRRSHDALSAPTLSQDKETGTTHRRHHVAPDGFYRGRKVVDV) are disordered. Residues 7 to 16 (RKTRSKRGMR) show a composition bias toward basic residues.

It belongs to the bacterial ribosomal protein bL32 family.

The chain is Large ribosomal subunit protein bL32 from Chromohalobacter salexigens (strain ATCC BAA-138 / DSM 3043 / CIP 106854 / NCIMB 13768 / 1H11).